A 179-amino-acid polypeptide reads, in one-letter code: Large ribosomal subunit protein uL6 (179 aa).

It belongs to the universal ribosomal protein uL6 family. In terms of assembly, part of the 50S ribosomal subunit.

Its function is as follows. This protein binds to the 23S rRNA, and is important in its secondary structure. It is located near the subunit interface in the base of the L7/L12 stalk, and near the tRNA binding site of the peptidyltransferase center. The sequence is that of Large ribosomal subunit protein uL6 from Legionella pneumophila (strain Paris).